The chain runs to 106 residues: L-rhamnose mutarotase (106 aa).

Tyr-20 provides a ligand contact to substrate. The active-site Proton donor is the His-24. Residues Tyr-43 and 78 to 79 (WW) contribute to the substrate site.

It belongs to the rhamnose mutarotase family. In terms of assembly, homodimer.

The protein resides in the cytoplasm. It catalyses the reaction alpha-L-rhamnose = beta-L-rhamnose. It functions in the pathway carbohydrate metabolism; L-rhamnose metabolism. Involved in the anomeric conversion of L-rhamnose. This is L-rhamnose mutarotase from Rhizobium johnstonii (strain DSM 114642 / LMG 32736 / 3841) (Rhizobium leguminosarum bv. viciae).